Consider the following 160-residue polypeptide: Cyclic pyranopterin monophosphate synthase (160 aa).

Residues methionine 77–histidine 79 and methionine 114–glutamate 115 contribute to the substrate site. Aspartate 129 is a catalytic residue.

Belongs to the MoaC family. In terms of assembly, homohexamer; trimer of dimers.

It carries out the reaction (8S)-3',8-cyclo-7,8-dihydroguanosine 5'-triphosphate = cyclic pyranopterin phosphate + diphosphate. The protein operates within cofactor biosynthesis; molybdopterin biosynthesis. Functionally, catalyzes the conversion of (8S)-3',8-cyclo-7,8-dihydroguanosine 5'-triphosphate to cyclic pyranopterin monophosphate (cPMP). The sequence is that of Cyclic pyranopterin monophosphate synthase from Listeria welshimeri serovar 6b (strain ATCC 35897 / DSM 20650 / CCUG 15529 / CIP 8149 / NCTC 11857 / SLCC 5334 / V8).